A 293-amino-acid chain; its full sequence is MSEGIDALSLKEEDVVKFLAAGVHLGSTNVGSSCQGYVFKRKSDGIHIINLRKTWEKLILAARIIASIENPADVCVISSRPYGTRAVLKFAQSTGAIPIAGRFTPGTFTNQIQKRFREPRLLISTDPQHDNQALTEASYVNIPVIALCNTDSPLRFVDCAIPCNNRGIQSIGTMWWILAREVLHLRGIISRKTPWNVMPDLFFYRDPEDIEKEEQAAAIASAKPDEPYQPDFSGNVDQSAAGADWGDQPVVTGADWTAEPSVSKDWAAEPAGWEADTTAVSGDWATPKTEDWA.

The segment at 219 to 293 (IASAKPDEPY…WATPKTEDWA (75 aa)) is disordered.

The protein belongs to the universal ribosomal protein uS2 family. In terms of assembly, component of the small ribosomal subunit. Mature ribosomes consist of a small (40S) and a large (60S) subunit. The 40S subunit contains about 33 different proteins and 1 molecule of RNA (18S). The 60S subunit contains about 49 different proteins and 3 molecules of RNA (28S, 5.8S and 5S). Interacts with ribosomal protein S21.

It localises to the cytoplasm. Functionally, required for the assembly and/or stability of the 40S ribosomal subunit. Required for the processing of the 20S rRNA-precursor to mature 18S rRNA in a late step of the maturation of 40S ribosomal subunits. In Hydra viridissima (Green hydra), this protein is Small ribosomal subunit protein uS2.